A 347-amino-acid polypeptide reads, in one-letter code: NADH-ubiquinone oxidoreductase chain 2 (347 aa).

11 consecutive transmembrane segments (helical) span residues 1–21, 25–45, 59–79, 96–116, 122–142, 145–165, 178–198, 201–221, 237–257, 276–296, and 326–346; these read MNPLIFTTIVLTIIMGTMIVM, HWLTVWIGFEMNMLAVIPILM, YFLTQATASMLLMLAIIINLL, IIMTLAMAMKLGLSPFHFWVP, IQLSSGLILLTWQKLAPMSIL, IFPTINLNLMLLMSVLSVAIG, IMAYSSIAHMGWMTAIMAYNP, TLLNLVIYILLTTTTFMMFML, APLLTMTILTIMLSMGGLPPL, IITPTIMAVTALLNLYFYMRL, and VSPLIILSTLALPLSPILMLL.

It belongs to the complex I subunit 2 family. Core subunit of respiratory chain NADH dehydrogenase (Complex I) which is composed of 45 different subunits. Interacts with TMEM242.

The protein localises to the mitochondrion inner membrane. The catalysed reaction is a ubiquinone + NADH + 5 H(+)(in) = a ubiquinol + NAD(+) + 4 H(+)(out). Core subunit of the mitochondrial membrane respiratory chain NADH dehydrogenase (Complex I) which catalyzes electron transfer from NADH through the respiratory chain, using ubiquinone as an electron acceptor. Essential for the catalytic activity and assembly of complex I. The chain is NADH-ubiquinone oxidoreductase chain 2 from Boneia bidens (Manado fruit bat).